Consider the following 207-residue polypeptide: ATP phosphoribosyltransferase (207 aa).

The protein belongs to the ATP phosphoribosyltransferase family. Short subfamily. As to quaternary structure, heteromultimer composed of HisG and HisZ subunits.

Its subcellular location is the cytoplasm. The catalysed reaction is 1-(5-phospho-beta-D-ribosyl)-ATP + diphosphate = 5-phospho-alpha-D-ribose 1-diphosphate + ATP. It functions in the pathway amino-acid biosynthesis; L-histidine biosynthesis; L-histidine from 5-phospho-alpha-D-ribose 1-diphosphate: step 1/9. Its function is as follows. Catalyzes the condensation of ATP and 5-phosphoribose 1-diphosphate to form N'-(5'-phosphoribosyl)-ATP (PR-ATP). Has a crucial role in the pathway because the rate of histidine biosynthesis seems to be controlled primarily by regulation of HisG enzymatic activity. The chain is ATP phosphoribosyltransferase from Dictyoglomus thermophilum (strain ATCC 35947 / DSM 3960 / H-6-12).